A 383-amino-acid polypeptide reads, in one-letter code: Arginine biosynthesis bifunctional protein ArgJ 1 (383 aa).

Residues 1-25 (MTVTAPKGSTGGGCRRGSKESGQPD) are disordered. Substrate-binding residues include Thr-146, Lys-168, Thr-179, Glu-259, Asn-378, and Ser-383. Residue Thr-179 is the Nucleophile of the active site.

This sequence belongs to the ArgJ family. In terms of assembly, heterotetramer of two alpha and two beta chains.

Its subcellular location is the cytoplasm. The catalysed reaction is N(2)-acetyl-L-ornithine + L-glutamate = N-acetyl-L-glutamate + L-ornithine. It carries out the reaction L-glutamate + acetyl-CoA = N-acetyl-L-glutamate + CoA + H(+). It functions in the pathway amino-acid biosynthesis; L-arginine biosynthesis; L-ornithine and N-acetyl-L-glutamate from L-glutamate and N(2)-acetyl-L-ornithine (cyclic): step 1/1. The protein operates within amino-acid biosynthesis; L-arginine biosynthesis; N(2)-acetyl-L-ornithine from L-glutamate: step 1/4. Catalyzes two activities which are involved in the cyclic version of arginine biosynthesis: the synthesis of N-acetylglutamate from glutamate and acetyl-CoA as the acetyl donor, and of ornithine by transacetylation between N(2)-acetylornithine and glutamate. In Streptomyces clavuligerus, this protein is Arginine biosynthesis bifunctional protein ArgJ 1.